Here is a 392-residue protein sequence, read N- to C-terminus: 8-amino-7-oxononanoate synthase (392 aa).

Substrate is bound at residue arginine 26. Residue 113–114 (GY) participates in pyridoxal 5'-phosphate binding. Position 138 (histidine 138) interacts with substrate. The pyridoxal 5'-phosphate site is built by serine 186, histidine 214, and threonine 241. Lysine 244 bears the N6-(pyridoxal phosphate)lysine mark. Substrate is bound at residue threonine 353.

Belongs to the class-II pyridoxal-phosphate-dependent aminotransferase family. BioF subfamily. In terms of assembly, homodimer. Pyridoxal 5'-phosphate is required as a cofactor.

The catalysed reaction is 6-carboxyhexanoyl-[ACP] + L-alanine + H(+) = (8S)-8-amino-7-oxononanoate + holo-[ACP] + CO2. It participates in cofactor biosynthesis; biotin biosynthesis. In terms of biological role, catalyzes the decarboxylative condensation of pimeloyl-[acyl-carrier protein] and L-alanine to produce 8-amino-7-oxononanoate (AON), [acyl-carrier protein], and carbon dioxide. This is 8-amino-7-oxononanoate synthase from Maricaulis maris (strain MCS10) (Caulobacter maris).